The sequence spans 248 residues: MKLLLLLLSFSLAPKTEAGEIIGGHEAKPHSRPYMAYLQIMDEYSGSKKCGGFLIREDFVLTAAHCSGSKINVTLGAHNIKEQEKMQQIIPVVKIIPHPAYNSKTISNDIMLLKLKSKAKRSSAVKPLNLPRRNVKVKPGDVCYVAGWGKLGPMGKYSDTLQEVELTVQEDQKCESYLKNYFDKANEICAGDPKIKRASFRGDSGGPLVCKKVAAGIVSYGQNDGSTPRAFTKVSTFLSWIKKTMKKS.

The first 18 residues, 1-18, serve as a signal peptide directing secretion; the sequence is MKLLLLLLSFSLAPKTEA. Positions 19-20 are cleaved as a propeptide — activation peptide; the sequence is GE. The Peptidase S1 domain occupies 21–246; it reads IIGGHEAKPH…FLSWIKKTMK (226 aa). Cys-50 and Cys-66 are joined by a disulfide. Catalysis depends on charge relay system residues His-65 and Asp-109. Disulfide bonds link Cys-143–Cys-210 and Cys-174–Cys-189. Ser-204 functions as the Charge relay system in the catalytic mechanism.

Belongs to the peptidase S1 family. Granzyme subfamily.

It localises to the secreted. The protein localises to the cytolytic granule. The catalysed reaction is Preferential cleavage: -Asp-|-Xaa- &gt;&gt; -Asn-|-Xaa- &gt; -Met-|-Xaa-, -Ser-|-Xaa-.. Inactivated by the serine protease inhibitor diisopropylfluorophosphate. Functionally, abundant protease in the cytosolic granules of cytotoxic T-cells and NK-cells which activates caspase-independent pyroptosis when delivered into the target cell through the immunological synapse. It cleaves after Asp. Once delivered into the target cell, acts by catalyzing cleavage of gasdermin-E (GSDME), releasing the pore-forming moiety of GSDME, thereby triggering pyroptosis and target cell death. Seems to be linked to an activation cascade of caspases (aspartate-specific cysteine proteases) responsible for apoptosis execution. Cleaves caspase-3 and -9 (CASP3 and CASP9, respectively) to give rise to active enzymes mediating apoptosis. Cleaves and activates CASP7 in response to bacterial infection, promoting plasma membrane repair. The protein is Granzyme B (Gzmb) of Rattus norvegicus (Rat).